A 341-amino-acid polypeptide reads, in one-letter code: Glycerol-3-phosphate dehydrogenase [NAD(P)+] (341 aa).

NADPH contacts are provided by S15, W16, R36, and K110. Sn-glycerol 3-phosphate-binding residues include K110, G139, and S141. An NADPH-binding site is contributed by A143. Residues K194, D247, S257, R258, and N259 each coordinate sn-glycerol 3-phosphate. K194 serves as the catalytic Proton acceptor. Residue R258 coordinates NADPH. The NADPH site is built by V282 and E284.

Belongs to the NAD-dependent glycerol-3-phosphate dehydrogenase family.

Its subcellular location is the cytoplasm. The enzyme catalyses sn-glycerol 3-phosphate + NAD(+) = dihydroxyacetone phosphate + NADH + H(+). The catalysed reaction is sn-glycerol 3-phosphate + NADP(+) = dihydroxyacetone phosphate + NADPH + H(+). The protein operates within membrane lipid metabolism; glycerophospholipid metabolism. Its function is as follows. Catalyzes the reduction of the glycolytic intermediate dihydroxyacetone phosphate (DHAP) to sn-glycerol 3-phosphate (G3P), the key precursor for phospholipid synthesis. In Xanthomonas euvesicatoria pv. vesicatoria (strain 85-10) (Xanthomonas campestris pv. vesicatoria), this protein is Glycerol-3-phosphate dehydrogenase [NAD(P)+].